The primary structure comprises 302 residues: MKNKLTVQEMILTLQKFWSSNGCMLMQAYDTEKGAGTMSPYTFLRAIGPEPWNAAYVEPSRRPADGRYGENPNRLYQHHQFQVVMKPSPENIQELYLESLKLLGIDPLEHDIRFVEDNWENPSMGCAGLGWEVWLDGMEITQFTYFQQVGGLQCHPVTSEITYGLERLASYIQEVESVYDLEWTQGVKYGEIFVQPEYEHSKYSFEISNQEMLLENFDKFEKEAKRCIEESLVHPAYDYILKCSHTFNLLDARGAVSVTERAGYLARIRNMARSVAKIFVAEREKLGFPLLNKDQHVSKEAE.

The protein belongs to the class-II aminoacyl-tRNA synthetase family. As to quaternary structure, tetramer of two alpha and two beta subunits.

It is found in the cytoplasm. The catalysed reaction is tRNA(Gly) + glycine + ATP = glycyl-tRNA(Gly) + AMP + diphosphate. The polypeptide is Glycine--tRNA ligase alpha subunit (Enterococcus faecalis (strain ATCC 700802 / V583)).